The primary structure comprises 250 residues: Pyrroloquinoline-quinone synthase (250 aa).

The protein belongs to the PqqC family.

It carries out the reaction 6-(2-amino-2-carboxyethyl)-7,8-dioxo-1,2,3,4,7,8-hexahydroquinoline-2,4-dicarboxylate + 3 O2 = pyrroloquinoline quinone + 2 H2O2 + 2 H2O + H(+). It functions in the pathway cofactor biosynthesis; pyrroloquinoline quinone biosynthesis. In terms of biological role, ring cyclization and eight-electron oxidation of 3a-(2-amino-2-carboxyethyl)-4,5-dioxo-4,5,6,7,8,9-hexahydroquinoline-7,9-dicarboxylic-acid to PQQ. The sequence is that of Pyrroloquinoline-quinone synthase from Xanthomonas euvesicatoria pv. vesicatoria (strain 85-10) (Xanthomonas campestris pv. vesicatoria).